The following is a 217-amino-acid chain: Protein canopy 4 (217 aa).

The signal sequence occupies residues 1-27 (MEMFTVFLFYMFSLVLANQEERLPNKC). 3 cysteine pairs are disulfide-bonded: Cys27–Cys185, Cys30–Cys173, and Cys83–Cys145. The segment at 194 to 217 (MGMKGSEEESEGKDGKETHDAGEL) is disordered. The segment covering 205–217 (GKDGKETHDAGEL) has biased composition (basic and acidic residues).

It belongs to the canopy family.

It is found in the secreted. The sequence is that of Protein canopy 4 (cnpy4) from Danio rerio (Zebrafish).